A 271-amino-acid polypeptide reads, in one-letter code: Mannosyl-3-phosphoglycerate phosphatase (271 aa).

The active-site Nucleophile is the D13. 3 residues coordinate Mg(2+): D13, D15, and D214.

It belongs to the HAD-like hydrolase superfamily. MPGP family. It depends on Mg(2+) as a cofactor.

Its subcellular location is the cytoplasm. The catalysed reaction is 2-O-(alpha-D-mannosyl)-3-phosphoglycerate + H2O = (2R)-2-O-(alpha-D-mannosyl)-glycerate + phosphate. The protein is Mannosyl-3-phosphoglycerate phosphatase of Escherichia coli (strain SMS-3-5 / SECEC).